We begin with the raw amino-acid sequence, 316 residues long: 4-hydroxy-3-methylbut-2-enyl diphosphate reductase (316 aa).

C12 is a binding site for [4Fe-4S] cluster. 2 residues coordinate (2E)-4-hydroxy-3-methylbut-2-enyl diphosphate: H41 and H74. Residues H41 and H74 each contribute to the dimethylallyl diphosphate site. Positions 41 and 74 each coordinate isopentenyl diphosphate. A [4Fe-4S] cluster-binding site is contributed by C96. (2E)-4-hydroxy-3-methylbut-2-enyl diphosphate is bound at residue H124. H124 lines the dimethylallyl diphosphate pocket. An isopentenyl diphosphate-binding site is contributed by H124. E126 functions as the Proton donor in the catalytic mechanism. T168 lines the (2E)-4-hydroxy-3-methylbut-2-enyl diphosphate pocket. Residue C198 coordinates [4Fe-4S] cluster. S226, S227, N228, and S270 together coordinate (2E)-4-hydroxy-3-methylbut-2-enyl diphosphate. Dimethylallyl diphosphate is bound by residues S226, S227, N228, and S270. Isopentenyl diphosphate-binding residues include S226, S227, N228, and S270.

This sequence belongs to the IspH family. [4Fe-4S] cluster is required as a cofactor.

It carries out the reaction isopentenyl diphosphate + 2 oxidized [2Fe-2S]-[ferredoxin] + H2O = (2E)-4-hydroxy-3-methylbut-2-enyl diphosphate + 2 reduced [2Fe-2S]-[ferredoxin] + 2 H(+). The enzyme catalyses dimethylallyl diphosphate + 2 oxidized [2Fe-2S]-[ferredoxin] + H2O = (2E)-4-hydroxy-3-methylbut-2-enyl diphosphate + 2 reduced [2Fe-2S]-[ferredoxin] + 2 H(+). It functions in the pathway isoprenoid biosynthesis; dimethylallyl diphosphate biosynthesis; dimethylallyl diphosphate from (2E)-4-hydroxy-3-methylbutenyl diphosphate: step 1/1. It participates in isoprenoid biosynthesis; isopentenyl diphosphate biosynthesis via DXP pathway; isopentenyl diphosphate from 1-deoxy-D-xylulose 5-phosphate: step 6/6. Catalyzes the conversion of 1-hydroxy-2-methyl-2-(E)-butenyl 4-diphosphate (HMBPP) into a mixture of isopentenyl diphosphate (IPP) and dimethylallyl diphosphate (DMAPP). Acts in the terminal step of the DOXP/MEP pathway for isoprenoid precursor biosynthesis. This Acinetobacter baylyi (strain ATCC 33305 / BD413 / ADP1) protein is 4-hydroxy-3-methylbut-2-enyl diphosphate reductase.